The primary structure comprises 358 residues: MDRDSYHHYFYDYDGGEDFYRSTTPSEDIWKKFELVPPPWDLGPAAGNPALSFGLLEPWPVGCAGDETESQDYWKAWDANYASLIRRDCMWSGFSTQEPLERAVSDLLAVGAPSGYSPKEFATPDYTPELEAGNLAPIFPCLLGEPKIQACSRSESPSDSEGEEIDVTVKKRQSLSTRKPVIIAVRADLLDPRMNLFHISIHQQQHNYAAPFPPESCFQEGAPKRMPPKEALEREAPGGKDDKEDEEIVSLPPVESEAAQSCQPKPIHYDTENWTKKKYHSYLERKRRNDQRSRFLALRDEVPALASCSRVSKVMILVKATEYLHELAEAEERMATEKRQLECQRRQLQKRIEYLSSY.

Disordered regions lie at residues 150-171 (ACSRSESPSDSEGEEIDVTVKK) and 219-245 (QEGAPKRMPPKEALEREAPGGKDDKED). Basic and acidic residues predominate over residues 227–242 (PPKEALEREAPGGKDD). Residues 274–326 (WTKKKYHSYLERKRRNDQRSRFLALRDEVPALASCSRVSKVMILVKATEYLHE) enclose the bHLH domain.

As to quaternary structure, efficient DNA binding requires dimerization with another bHLH protein. Binds DNA as a heterodimer with MAX. In terms of tissue distribution, detected in adult testis.

The protein localises to the nucleus. This is Putative myc-like protein MYCLP1 (MYCLP1) from Homo sapiens (Human).